Consider the following 353-residue polypeptide: uncharacterized protein (353 aa).

Positions 18 to 83 constitute an HTH luxR-type domain; the sequence is NIEFPCLLSE…TLWRDVFLRF (66 aa). The segment at residues 42–61 is a DNA-binding region (H-T-H motif); the sequence is VNEISKRRNRSIKTVSCQKM. Positions 98–350 constitute an EAL domain; that stretch reads NSSVLPVVSS…AFVRKLLASL (253 aa).

This is an uncharacterized protein from Escherichia coli (strain K12).